A 264-amino-acid polypeptide reads, in one-letter code: Thymidylate synthase (264 aa).

Arginine 21 contacts dUMP. Histidine 51 is a (6R)-5,10-methylene-5,6,7,8-tetrahydrofolate binding site. DUMP is bound at residue arginine 126–arginine 127. Cysteine 146 acts as the Nucleophile in catalysis. DUMP-binding positions include arginine 166–aspartate 169, asparagine 177, and histidine 207–tyrosine 209. Position 169 (aspartate 169) interacts with (6R)-5,10-methylene-5,6,7,8-tetrahydrofolate. Alanine 263 is a (6R)-5,10-methylene-5,6,7,8-tetrahydrofolate binding site.

Belongs to the thymidylate synthase family. Bacterial-type ThyA subfamily. Homodimer.

It is found in the cytoplasm. The enzyme catalyses dUMP + (6R)-5,10-methylene-5,6,7,8-tetrahydrofolate = 7,8-dihydrofolate + dTMP. Its pathway is pyrimidine metabolism; dTTP biosynthesis. In terms of biological role, catalyzes the reductive methylation of 2'-deoxyuridine-5'-monophosphate (dUMP) to 2'-deoxythymidine-5'-monophosphate (dTMP) while utilizing 5,10-methylenetetrahydrofolate (mTHF) as the methyl donor and reductant in the reaction, yielding dihydrofolate (DHF) as a by-product. This enzymatic reaction provides an intracellular de novo source of dTMP, an essential precursor for DNA biosynthesis. This is Thymidylate synthase from Shewanella baltica (strain OS155 / ATCC BAA-1091).